A 207-amino-acid chain; its full sequence is Cytochrome c biogenesis ATP-binding export protein CcmA (207 aa).

Residues 4–207 (LEARELLCER…RISLTQTGAA (204 aa)) enclose the ABC transporter domain. 36–43 (GSNGAGKT) provides a ligand contact to ATP.

It belongs to the ABC transporter superfamily. CcmA exporter (TC 3.A.1.107) family. In terms of assembly, the complex is composed of two ATP-binding proteins (CcmA) and two transmembrane proteins (CcmB).

The protein resides in the cell inner membrane. It carries out the reaction heme b(in) + ATP + H2O = heme b(out) + ADP + phosphate + H(+). Functionally, part of the ABC transporter complex CcmAB involved in the biogenesis of c-type cytochromes; once thought to export heme, this seems not to be the case, but its exact role is uncertain. Responsible for energy coupling to the transport system. The sequence is that of Cytochrome c biogenesis ATP-binding export protein CcmA from Escherichia coli O6:H1 (strain CFT073 / ATCC 700928 / UPEC).